The primary structure comprises 1436 residues: tRNA (guanosine(18)-2'-O)-methyltransferase (1436 aa).

S-adenosyl-L-methionine is bound by residues 1365-1367 (LEQ), Gly1389, and 1409-1418 (IQQFGVIRSM).

It belongs to the class IV-like SAM-binding methyltransferase superfamily. RNA methyltransferase TrmH family.

It is found in the cytoplasm. It carries out the reaction guanosine(18) in tRNA + S-adenosyl-L-methionine = 2'-O-methylguanosine(18) in tRNA + S-adenosyl-L-homocysteine + H(+). In terms of biological role, S-adenosyl-L-methionine-dependent 2'-O-ribose methyltransferase that catalyzes the formation of 2'-O-methylguanosine at position 18 (Gm18) in various tRNAs. This chain is tRNA (guanosine(18)-2'-O)-methyltransferase, found in Saccharomyces cerevisiae (strain ATCC 204508 / S288c) (Baker's yeast).